Reading from the N-terminus, the 582-residue chain is WD repeat-containing protein JIP5 (582 aa).

WD repeat units lie at residues 27-68 (KYPE…EAQS), 125-168 (RHKG…VLSK), 177-216 (DKNDAITKLVHSTSHPFLLSGTENGDVLVYDSNNMASNQL), 265-310 (DQED…LMDQ), and 373-410 (GPADEVGILDIDYDYRLISAGMDSLKIWSNQEETLNSD). Disordered regions lie at residues 405–496 (ETLN…DTEL) and 531–582 (TKEQ…FDDL). Composition is skewed to acidic residues over residues 410–438 (DSDDSDSDDSDSDIGSNDSEDSDSDDDDV) and 447–485 (EVNDFSPDSDSETGNDDSDENLEDVADSDSNEDQIENVT). 2 stretches are compositionally biased toward basic and acidic residues: residues 531 to 540 (TKEQSTKKAD) and 570 to 582 (QKHEHGIRRFDDL).

It belongs to the WD repeat WDR55 family.

Its subcellular location is the nucleus. It localises to the nucleolus. This Debaryomyces hansenii (strain ATCC 36239 / CBS 767 / BCRC 21394 / JCM 1990 / NBRC 0083 / IGC 2968) (Yeast) protein is WD repeat-containing protein JIP5 (JIP5).